A 777-amino-acid polypeptide reads, in one-letter code: Cullin-3 (777 aa).

Positions Y568 to P596 are disordered. The segment covering S576–E589 has biased composition (low complexity). The Cullin neddylation domain maps to D707–D769. A Glycyl lysine isopeptide (Lys-Gly) (interchain with G-Cter in NEDD8) cross-link involves residue K721.

This sequence belongs to the cullin family. As to quaternary structure, probable component of multiple cullin-RING-based BCB (BTB-CUL3-BTB) E3 ubiquitin-protein ligase complexes formed by cul-3, rbx-1 and a variable BTB domain-containing protein acting as both, adapter to cullin and substrate recognition component. Interacts with bath-15, bath-40, bath-41, bath-42, C17F4.8, tag-303, D2045.8, F57C2.1, ZC239.15 and B0281.5. Interacts with mel-26 (via BTB domain). Interacts with dcn-1. In terms of processing, neddylated. Deneddylated via its interaction with the COP9 signalosome (CSN) complex.

It is found in the cytoplasm. It localises to the nucleus. Its pathway is protein modification; protein ubiquitination. Probable core component of multiple cullin-RING-based BCB (BTB-CUL3-BTB) E3 ubiquitin-protein ligase complexes which mediate the ubiquitination and subsequent proteasomal degradation of target proteins. Probably acts as a scaffold protein which may contribute to catalysis through positioning of the substrate and the ubiquitin-conjugating enzyme. Required to target mei-3/katanin for degradation at the meiosis to mitosis transition via its neddylation and deneddylation. Functions in ubiquitin-mediated degradation of CKIs to target cki-1 for degradation. Regulates microtubule stability in the early embryo. In body wall muscles, involved in the organization of myosin thick filaments, likely by regulating the degradation of microtubule severing protein mei-1 downstream of unc-89. Together with spop-1, may promote the ubiquitination and proteasomal degradation of target bromodomain-containing proteins such as bet-1. This Caenorhabditis elegans protein is Cullin-3.